The sequence spans 852 residues: DNA mismatch repair protein MutS (852 aa).

Residue 602-609 coordinates ATP; that stretch reads GPNMSGKS.

Belongs to the DNA mismatch repair MutS family.

Its function is as follows. This protein is involved in the repair of mismatches in DNA. It is possible that it carries out the mismatch recognition step. This protein has a weak ATPase activity. This is DNA mismatch repair protein MutS from Streptococcus thermophilus (strain CNRZ 1066).